A 162-amino-acid polypeptide reads, in one-letter code: Regulator of sigma D (162 aa).

The protein belongs to the Rsd/AlgQ family. In terms of assembly, interacts with RpoD.

The protein resides in the cytoplasm. In terms of biological role, binds RpoD and negatively regulates RpoD-mediated transcription activation by preventing the interaction between the primary sigma factor RpoD with the catalytic core of the RNA polymerase and with promoter DNA. May be involved in replacement of the RNA polymerase sigma subunit from RpoD to RpoS during the transition from exponential growth to the stationary phase. The polypeptide is Regulator of sigma D (Salmonella typhi).